Here is a 152-residue protein sequence, read N- to C-terminus: Methylglyoxal synthase (152 aa).

An MGS-like domain is found at R6–K152. Residues H19, K23, T45–T48, and S65–G66 contribute to the substrate site. D71 serves as the catalytic Proton donor/acceptor. H98 is a substrate binding site.

This sequence belongs to the methylglyoxal synthase family.

The catalysed reaction is dihydroxyacetone phosphate = methylglyoxal + phosphate. In terms of biological role, catalyzes the formation of methylglyoxal from dihydroxyacetone phosphate. This is Methylglyoxal synthase from Pectobacterium atrosepticum (strain SCRI 1043 / ATCC BAA-672) (Erwinia carotovora subsp. atroseptica).